The following is a 169-amino-acid chain: MERAIFAGGCFWCMVQPFEEQAGILSVRSGYTGGHVPNPSYEQVCSKTTGHTEAVEIIFDPSLISYSDLVELYWAQTDPTDAFGQFEDRGDNYRPVIYYTDERQREIAERSKQSLQASGRFDQPIVTSIEPAEPFYLAEDYHQGFYQKNPQRYAQSSAIRHQFLEEHWQ.

The active site involves cysteine 10.

The protein belongs to the MsrA Met sulfoxide reductase family.

The enzyme catalyses L-methionyl-[protein] + [thioredoxin]-disulfide + H2O = L-methionyl-(S)-S-oxide-[protein] + [thioredoxin]-dithiol. It carries out the reaction [thioredoxin]-disulfide + L-methionine + H2O = L-methionine (S)-S-oxide + [thioredoxin]-dithiol. Has an important function as a repair enzyme for proteins that have been inactivated by oxidation. Catalyzes the reversible oxidation-reduction of methionine sulfoxide in proteins to methionine. This Streptococcus equi subsp. zooepidemicus (strain MGCS10565) protein is Peptide methionine sulfoxide reductase MsrA.